Reading from the N-terminus, the 852-residue chain is Nucleolar protein 14 homolog (852 aa).

A disordered region spans residues 1–40 (MVAKGKKASADAVYAKKTTRSANPFDNSTAQSSKRGNPFD). Residues 20 to 35 (RSANPFDNSTAQSSKR) show a composition bias toward polar residues. Positions 190 to 221 (IDEMIVEQKRRKNEIAKEKDEVYDLTEKLDAN) form a coiled coil. Disordered regions lie at residues 288–324 (RRMRADGEEDEEASVAKPKHRSADDLDDGYFLAGEDD) and 338–410 (LGTH…KSAD). The segment covering 344-353 (GKKEAVLKGD) has biased composition (basic and acidic residues). Over residues 354–381 (ENEDDDDKEGEEEEEEDSDEESDSEVDN) the composition is skewed to acidic residues. Positions 774 to 851 (KMSKAKEERA…ELSRAKKKKK (78 aa)) form a coiled coil.

The protein belongs to the NOP14 family. Component of the ribosomal small subunit (SSU) processome.

It localises to the nucleus. Its subcellular location is the nucleolus. In terms of biological role, involved in nucleolar processing of pre-18S ribosomal RNA. Has a role in the nuclear export of 40S pre-ribosomal subunit to the cytoplasm. The chain is Nucleolar protein 14 homolog (l(3)07882) from Drosophila melanogaster (Fruit fly).